A 419-amino-acid chain; its full sequence is GTPase Obg (419 aa).

Positions 1–158 constitute an Obg domain; it reads MIFIDTAEII…RRLRLELKLV (158 aa). In terms of domain architecture, OBG-type G spans 159 to 328; the sequence is AHVGLVGLPN…LVDVLFELIS (170 aa). GTP is bound by residues 165-172, 190-194, 211-214, 281-284, and 309-311; these read GLPNAGKS, FTTRS, DVPG, NKID, and SAA. Mg(2+) contacts are provided by S172 and T192. Residues 344–419 form the OCT domain; sequence ELPPLPEDFS…VIHDKAFEIL (76 aa).

This sequence belongs to the TRAFAC class OBG-HflX-like GTPase superfamily. OBG GTPase family. As to quaternary structure, monomer. Requires Mg(2+) as cofactor.

It is found in the cytoplasm. An essential GTPase which binds GTP, GDP and possibly (p)ppGpp with moderate affinity, with high nucleotide exchange rates and a fairly low GTP hydrolysis rate. Plays a role in control of the cell cycle, stress response, ribosome biogenesis and in those bacteria that undergo differentiation, in morphogenesis control. This is GTPase Obg from Coprothermobacter proteolyticus (strain ATCC 35245 / DSM 5265 / OCM 4 / BT).